The primary structure comprises 101 residues: uncharacterized protein (101 aa).

The signal sequence occupies residues 1-27 (MQLTGSIYPWFTAYALLKSTLMELINS). Helical transmembrane passes span 42–64 (LVPYWLSIRLSLLYFKLTEAISF) and 79–98 (TFVFGYIVNCFFIIHLNTFL).

It localises to the cytoplasm. The protein localises to the nucleus membrane. This is an uncharacterized protein from Schizosaccharomyces pombe (strain 972 / ATCC 24843) (Fission yeast).